We begin with the raw amino-acid sequence, 151 residues long: Deoxyuridine 5'-triphosphate nucleotidohydrolase (151 aa).

Substrate contacts are provided by residues 70–72 (RSG), Asn83, 87–89 (LID), and Lys97.

This sequence belongs to the dUTPase family. The cofactor is Mg(2+).

It catalyses the reaction dUTP + H2O = dUMP + diphosphate + H(+). It functions in the pathway pyrimidine metabolism; dUMP biosynthesis; dUMP from dCTP (dUTP route): step 2/2. Functionally, this enzyme is involved in nucleotide metabolism: it produces dUMP, the immediate precursor of thymidine nucleotides and it decreases the intracellular concentration of dUTP so that uracil cannot be incorporated into DNA. The polypeptide is Deoxyuridine 5'-triphosphate nucleotidohydrolase (Idiomarina loihiensis (strain ATCC BAA-735 / DSM 15497 / L2-TR)).